Consider the following 76-residue polypeptide: DNA-directed RNA polymerase subunit epsilon (76 aa).

The protein belongs to the RNA polymerase subunit epsilon family. In terms of assembly, RNAP is composed of a core of 2 alpha, a beta and a beta' subunit. The core is associated with a delta subunit, and at least one of epsilon or omega. When a sigma factor is associated with the core the holoenzyme is formed, which can initiate transcription.

It catalyses the reaction RNA(n) + a ribonucleoside 5'-triphosphate = RNA(n+1) + diphosphate. Its function is as follows. A non-essential component of RNA polymerase (RNAP). The sequence is that of DNA-directed RNA polymerase subunit epsilon from Lactococcus lactis subsp. lactis (strain IL1403) (Streptococcus lactis).